The following is a 256-amino-acid chain: Calsenilin (256 aa).

The interval 1-22 is disordered; the sequence is MQRTKEAMKASDGSLLGDPGRI. At Ser14 the chain carries Phosphoserine. A Glycyl lysine isopeptide (Lys-Gly) (interchain with G-Cter in SUMO1) cross-link involves residue Lys26. Residues Cys45 and Cys46 are each lipidated (S-palmitoyl cysteine). 2 positions are modified to phosphoserine: Ser60 and Ser63. The EF-hand 1; degenerate domain occupies 67-123; the sequence is LELSTVRHQPEGLDQLQAQTKFTKKELQSLYRGFKNECPTGLVDEDTFKLIYSQFFP. Residue Lys90 forms a Glycyl lysine isopeptide (Lys-Gly) (interchain with G-Cter in SUMO1) linkage. EF-hand domains are found at residues 126 to 161, 162 to 197, and 210 to 245; these read DATT…LLRG, TVHE…IYDM, and APLE…DENI. Residues Asp175, Asn177, Asp179, Tyr181, Glu186, Asp223, Asn225, Asp227, and Glu234 each coordinate Ca(2+). The interval 243 to 256 is interaction with KCND2; the sequence is ENIMSSMQLFENVI.

Belongs to the recoverin family. Binds to DNA as a homomultimer. Dimerization is induced by binding to calcium. Interacts with the C-terminus of PSEN1 and PSEN2 and with PSEN2 CTF subunit. Associates with KCN1. Component of heteromultimeric potassium channels. Identified in potassium channel complexes containing KCND1, KCND2, KCND3, KCNIP1, KCNIP2, KCNIP3, KCNIP4, DPP6 and DPP10. Interacts with KCND2 and KCND3. Palmitoylated. Palmitoylation enhances association with the plasma membrane. In terms of processing, proteolytically cleaved by caspase-3. In terms of tissue distribution, detected in brain cortex, thalamus, dentate gyrus and cerebellum (at protein level). Expressed in brain. Colocalizes with KCND2 in excitatory neurons including cortical and hippocampal CA1 pyramidal cells.

The protein resides in the cytoplasm. It is found in the cell membrane. Its subcellular location is the endoplasmic reticulum. It localises to the golgi apparatus. The protein localises to the nucleus. In terms of biological role, calcium-dependent transcriptional repressor that binds to the DRE element of genes including PDYN and FOS. Affinity for DNA is reduced upon binding to calcium and enhanced by binding to magnesium. Seems to be involved in nociception. Functionally, regulatory subunit of Kv4/D (Shal)-type voltage-gated rapidly inactivating A-type potassium channels, such as KCND2/Kv4.2 and KCND3/Kv4.3. Modulates channel expression at the cell membrane, gating characteristics, inactivation kinetics and rate of recovery from inactivation in a calcium-dependent and isoform-specific manner. May play a role in the regulation of PSEN2 proteolytic processing and apoptosis. Together with PSEN2 involved in modulation of amyloid-beta formation. This Rattus norvegicus (Rat) protein is Calsenilin (Kcnip3).